A 509-amino-acid chain; its full sequence is MGPCCSKQTKALNNQPDKSKSKDVVLKENTSPFSQNTNNIMHVSHNQPPNINPPMLGGPGVTIFVALYDYEARISEDLSFKKGERLQIINTADGDWWYARSLITNSEGYIPSTYVAPEKSYEAEEWYFGDVKRAEAEKRLMVRGLPSGTFLIRKAETAVGNFSLSVRDGDSVKHYRVRKLDTGGYFITTRAPFNSLYELVQHYTKDADGLVCALTLPCPKDKPVTGGIAKDAWEIPRESLRLNRKLGAGQFGEVWAGVWNNTTQVAVKTLKPGTMSPASFLDEAGVMKKLRHKHLVQLYAICSDREPIYIVTEYMSGGSLLDYLSKGEGVNLQLPTLIDMAAQVASGMAFLEAQGYIHRDLAARNILVGENYICKVADFGLARLIEDDEYTAHEGAKFPIKWTAPEAALYNRFTIKSDVWSFGILMAEIVTKGRIPYPGMTNAQTIAEVEKGYRMPIMPGCPEPLYNIMLQTWNKDPENRPTFDYLQGVLEDYFVSTEQGYRDLGEANS.

Polar residues predominate over residues 1–16 (MGPCCSKQTKALNNQP). The segment at 1-23 (MGPCCSKQTKALNNQPDKSKSKD) is disordered. Glycine 2 carries the N-myristoyl glycine lipid modification. The region spanning 59–120 (PGVTIFVALY…PSTYVAPEKS (62 aa)) is the SH3 domain. The SH2 domain occupies 126 to 218 (WYFGDVKRAE…GLVCALTLPC (93 aa)). The 256-residue stretch at 240-495 (LRLNRKLGAG…LQGVLEDYFV (256 aa)) folds into the Protein kinase domain. ATP contacts are provided by residues 246-254 (LGAGQFGEV) and lysine 268. The Proton acceptor role is filled by aspartate 360. Tyrosine 390 carries the post-translational modification Phosphotyrosine; by autocatalysis.

It belongs to the protein kinase superfamily. Tyr protein kinase family. SRC subfamily.

The catalysed reaction is L-tyrosyl-[protein] + ATP = O-phospho-L-tyrosyl-[protein] + ADP + H(+). The protein is Tyrosine-protein kinase STK (STK) of Hydra vulgaris (Hydra).